We begin with the raw amino-acid sequence, 309 residues long: Olfactory receptor 5B2 (309 aa).

Over 1–23 the chain is Extracellular; that stretch reads MENCTEVTKFILLGLTSVPELQI. N-linked (GlcNAc...) asparagine glycosylation occurs at Asn3. The helical transmembrane segment at 24–47 threads the bilayer; that stretch reads PLFILFTFIYLLTLCGNLGMMLLI. Topologically, residues 48-55 are cytoplasmic; the sequence is LMDSCLHT. The chain crosses the membrane as a helical span at residues 56–77; the sequence is PMYFFLSNLSLVDFGYSSAVTP. Residues 78–98 are Extracellular-facing; sequence KVMAGFLRGDKVISYNACAVQ. Cys95 and Cys187 are oxidised to a cystine. A helical membrane pass occupies residues 99–118; the sequence is MFFFVALATVENYLLASMAY. Residues 119–137 lie on the Cytoplasmic side of the membrane; the sequence is DRYAAVCKPLHYTTTMTAS. The helical transmembrane segment at 138-156 threads the bilayer; the sequence is VGACLALGSYVCGFLNASF. Over 157–193 the chain is Extracellular; that stretch reads HIGGIFSLSFCKSNLVHHFFCDVPAVMALSCSDKHTS. The chain crosses the membrane as a helical span at residues 194 to 217; sequence EVILVFMSSFNIFFVLLVIFISYL. The Cytoplasmic segment spans residues 218–234; sequence FIFITILKMHSAKGHQK. Residues 235 to 257 traverse the membrane as a helical segment; sequence ALSTCASHFTAVSVFYGTVIFIY. The Extracellular portion of the chain corresponds to 258 to 270; sequence LQPSSSHSMDTDK. Residues 271–290 form a helical membrane-spanning segment; sequence MASVFYAMIIPMLNPVVYSL. Over 291–309 the chain is Cytoplasmic; it reads RNREVQNAFKKVLRRQKFL.

This sequence belongs to the G-protein coupled receptor 1 family.

Its subcellular location is the cell membrane. In terms of biological role, odorant receptor. The protein is Olfactory receptor 5B2 (OR5B2) of Homo sapiens (Human).